A 251-amino-acid chain; its full sequence is tRNA pseudouridine synthase A (251 aa).

The active-site Nucleophile is Asp52. Tyr113 contributes to the substrate binding site.

The protein belongs to the tRNA pseudouridine synthase TruA family. As to quaternary structure, homodimer.

It catalyses the reaction uridine(38/39/40) in tRNA = pseudouridine(38/39/40) in tRNA. In terms of biological role, formation of pseudouridine at positions 38, 39 and 40 in the anticodon stem and loop of transfer RNAs. This chain is tRNA pseudouridine synthase A, found in Brucella abortus (strain 2308).